The chain runs to 218 residues: Small ribosomal subunit protein uS3c (218 aa).

The KH type-2 domain occupies 43-118 (IKNYVQKNMK…KLNISITRIE (76 aa)).

The protein belongs to the universal ribosomal protein uS3 family. Part of the 30S ribosomal subunit.

It is found in the plastid. The protein localises to the chloroplast. The polypeptide is Small ribosomal subunit protein uS3c (rps3) (Populus alba (White poplar)).